The sequence spans 320 residues: Methionyl-tRNA formyltransferase (320 aa).

112 to 115 (SILP) contributes to the (6S)-5,6,7,8-tetrahydrofolate binding site.

It belongs to the Fmt family.

The enzyme catalyses L-methionyl-tRNA(fMet) + (6R)-10-formyltetrahydrofolate = N-formyl-L-methionyl-tRNA(fMet) + (6S)-5,6,7,8-tetrahydrofolate + H(+). Attaches a formyl group to the free amino group of methionyl-tRNA(fMet). The formyl group appears to play a dual role in the initiator identity of N-formylmethionyl-tRNA by promoting its recognition by IF2 and preventing the misappropriation of this tRNA by the elongation apparatus. The chain is Methionyl-tRNA formyltransferase from Shewanella woodyi (strain ATCC 51908 / MS32).